The chain runs to 46 residues: Photosystem II reaction center protein K (46 aa).

Positions 1-9 (MESILMIFA) are excised as a propeptide. Residues 25 to 45 (LPVIPVLFLLLAFVWQAAVSF) form a helical membrane-spanning segment.

The protein belongs to the PsbK family. As to quaternary structure, PSII is composed of 1 copy each of membrane proteins PsbA, PsbB, PsbC, PsbD, PsbE, PsbF, PsbH, PsbI, PsbJ, PsbK, PsbL, PsbM, PsbT, PsbX, PsbY, PsbZ, Psb30/Ycf12, at least 3 peripheral proteins of the oxygen-evolving complex and a large number of cofactors. It forms dimeric complexes.

Its subcellular location is the plastid. It is found in the chloroplast thylakoid membrane. Its function is as follows. One of the components of the core complex of photosystem II (PSII). PSII is a light-driven water:plastoquinone oxidoreductase that uses light energy to abstract electrons from H(2)O, generating O(2) and a proton gradient subsequently used for ATP formation. It consists of a core antenna complex that captures photons, and an electron transfer chain that converts photonic excitation into a charge separation. This chain is Photosystem II reaction center protein K, found in Stigeoclonium helveticum (Green alga).